Here is a 22-residue protein sequence, read N- to C-terminus: Protein YncP (22 aa).

The sequence is that of Protein YncP from Escherichia coli (strain K12).